Consider the following 63-residue polypeptide: Large ribosomal subunit protein uL29 (63 aa).

It belongs to the universal ribosomal protein uL29 family.

The sequence is that of Large ribosomal subunit protein uL29 from Salmonella agona (strain SL483).